The chain runs to 494 residues: Cobyric acid synthase (494 aa).

The GATase cobBQ-type domain maps to K254 to A453. The active-site Nucleophile is the C338. H445 is a catalytic residue.

The protein belongs to the CobB/CobQ family. CobQ subfamily.

It functions in the pathway cofactor biosynthesis; adenosylcobalamin biosynthesis. Functionally, catalyzes amidations at positions B, D, E, and G on adenosylcobyrinic A,C-diamide. NH(2) groups are provided by glutamine, and one molecule of ATP is hydrogenolyzed for each amidation. The sequence is that of Cobyric acid synthase from Albidiferax ferrireducens (strain ATCC BAA-621 / DSM 15236 / T118) (Rhodoferax ferrireducens).